The following is a 664-amino-acid chain: Bifunctional polymyxin resistance protein ArnA (664 aa).

Residues 1–308 (MSTKAVVFAY…EFGLVAGSQM (308 aa)) are formyltransferase ArnAFT. His106 (proton donor; for formyltransferase activity) is an active-site residue. (6R)-10-formyltetrahydrofolate-binding positions include Arg116 and 138–142 (VKRAD). Positions 318–664 (RRTRVLILGV…EAMAEKADQC (347 aa)) are dehydrogenase ArnADH. Residues Asp351 and 372 to 373 (DI) contribute to the NAD(+) site. Residues Ala397, Tyr402, and 436 to 437 (TS) contribute to the UDP-alpha-D-glucuronate site. The active-site Proton acceptor; for decarboxylase activity is the Glu438. Residues Arg464, Asn495, 529-538 (RLVDGGAQKR), and Tyr616 each bind UDP-alpha-D-glucuronate. The Proton donor; for decarboxylase activity role is filled by Arg622.

The protein in the N-terminal section; belongs to the Fmt family. UDP-L-Ara4N formyltransferase subfamily. It in the C-terminal section; belongs to the NAD(P)-dependent epimerase/dehydratase family. UDP-glucuronic acid decarboxylase subfamily. As to quaternary structure, homohexamer, formed by a dimer of trimers.

It catalyses the reaction UDP-alpha-D-glucuronate + NAD(+) = UDP-beta-L-threo-pentopyranos-4-ulose + CO2 + NADH. It carries out the reaction UDP-4-amino-4-deoxy-beta-L-arabinose + (6R)-10-formyltetrahydrofolate = UDP-4-deoxy-4-formamido-beta-L-arabinose + (6S)-5,6,7,8-tetrahydrofolate + H(+). Its pathway is nucleotide-sugar biosynthesis; UDP-4-deoxy-4-formamido-beta-L-arabinose biosynthesis; UDP-4-deoxy-4-formamido-beta-L-arabinose from UDP-alpha-D-glucuronate: step 1/3. It participates in nucleotide-sugar biosynthesis; UDP-4-deoxy-4-formamido-beta-L-arabinose biosynthesis; UDP-4-deoxy-4-formamido-beta-L-arabinose from UDP-alpha-D-glucuronate: step 3/3. It functions in the pathway bacterial outer membrane biogenesis; lipopolysaccharide biosynthesis. Its function is as follows. Bifunctional enzyme that catalyzes the oxidative decarboxylation of UDP-glucuronic acid (UDP-GlcUA) to UDP-4-keto-arabinose (UDP-Ara4O) and the addition of a formyl group to UDP-4-amino-4-deoxy-L-arabinose (UDP-L-Ara4N) to form UDP-L-4-formamido-arabinose (UDP-L-Ara4FN). The modified arabinose is attached to lipid A and is required for resistance to polymyxin and cationic antimicrobial peptides. The protein is Bifunctional polymyxin resistance protein ArnA of Pseudomonas syringae pv. syringae (strain B728a).